Consider the following 79-residue polypeptide: U-actitoxin-Avd8b (79 aa).

The N-terminal stretch at 1–19 is a signal peptide; sequence MKSLVIVFVVLLGVAMISA. The propeptide occupies 20 to 36; that stretch reads NEEELLAILQDQRNDAR.

It belongs to the sea anemone 8 toxin family.

It is found in the secreted. The protein localises to the nematocyst. This is U-actitoxin-Avd8b from Anemonia viridis (Snakelocks anemone).